A 306-amino-acid polypeptide reads, in one-letter code: MVAHAATCLDGKSLAQSIERQLADHVRTFQAQWGRSPGLAVLRVGNDPASAVYVRAKEQACSRVGIQSFGAHLPATITEAALLAKITELNQDERVDGILLQLPLPPHLDPRPLLYAIHPDKDVDGLHPENLGRLVRDEPGLRSCTPAGVMQLLAAYGIDVVGRSAVVVGRSILVGKPLALMLLSANATVTIAHSRSRELASITRSAEILVTAMGQPRRITADMIRPGAVVIDVGINRIQRPDGKSSLWGDVDYEAARAVASYITPVPGGVGPMTVAMLLHNTVWSYCRRHNWQQPLLSLTSMPPAP.

Residues 169 to 171 (GRS), serine 194, and isoleucine 235 contribute to the NADP(+) site.

It belongs to the tetrahydrofolate dehydrogenase/cyclohydrolase family. Homodimer.

The catalysed reaction is (6R)-5,10-methylene-5,6,7,8-tetrahydrofolate + NADP(+) = (6R)-5,10-methenyltetrahydrofolate + NADPH. The enzyme catalyses (6R)-5,10-methenyltetrahydrofolate + H2O = (6R)-10-formyltetrahydrofolate + H(+). It functions in the pathway one-carbon metabolism; tetrahydrofolate interconversion. Its function is as follows. Catalyzes the oxidation of 5,10-methylenetetrahydrofolate to 5,10-methenyltetrahydrofolate and then the hydrolysis of 5,10-methenyltetrahydrofolate to 10-formyltetrahydrofolate. This is Bifunctional protein FolD from Thermosynechococcus vestitus (strain NIES-2133 / IAM M-273 / BP-1).